Reading from the N-terminus, the 300-residue chain is 4-hydroxy-tetrahydrodipicolinate synthase (300 aa).

Residue T57 participates in pyruvate binding. Y145 (proton donor/acceptor) is an active-site residue. The active-site Schiff-base intermediate with substrate is the K173. I213 lines the pyruvate pocket.

It belongs to the DapA family. Homotetramer; dimer of dimers.

It localises to the cytoplasm. It catalyses the reaction L-aspartate 4-semialdehyde + pyruvate = (2S,4S)-4-hydroxy-2,3,4,5-tetrahydrodipicolinate + H2O + H(+). Its pathway is amino-acid biosynthesis; L-lysine biosynthesis via DAP pathway; (S)-tetrahydrodipicolinate from L-aspartate: step 3/4. Its function is as follows. Catalyzes the condensation of (S)-aspartate-beta-semialdehyde [(S)-ASA] and pyruvate to 4-hydroxy-tetrahydrodipicolinate (HTPA). This Corynebacterium urealyticum (strain ATCC 43042 / DSM 7109) protein is 4-hydroxy-tetrahydrodipicolinate synthase.